The sequence spans 115 residues: Large ribosomal subunit protein uL24 (115 aa).

The protein belongs to the universal ribosomal protein uL24 family. Part of the 50S ribosomal subunit.

Functionally, one of two assembly initiator proteins, it binds directly to the 5'-end of the 23S rRNA, where it nucleates assembly of the 50S subunit. In terms of biological role, one of the proteins that surrounds the polypeptide exit tunnel on the outside of the subunit. The protein is Large ribosomal subunit protein uL24 of Phytoplasma mali (strain AT).